The sequence spans 2193 residues: Genome polyprotein (2193 aa).

The tract at residues 1–23 is disordered; the sequence is MGSQVSTQRSGSHENSNSASEGS. Gly-2 is lipidated: N-myristoyl glycine; by host. Residues 2–1503 are Cytoplasmic-facing; that stretch reads GSQVSTQRSG…HLNRAVLVMQ (1502 aa). Residues 566 to 588 form an amphipathic alpha-helix region; the sequence is GDPIADMIDQTVNNQVNRSLTAL. Catalysis depends on for protease 2A activity residues His-883 and Asp-901. Residues Cys-918 and Cys-920 each contribute to the Zn(2+) site. Cys-972 acts as the For protease 2A activity in catalysis. The Zn(2+) site is built by Cys-978 and His-980. Residues 1112–1184 are membrane-binding; that stretch reads SASWLKKFND…EQSAASQEDL (73 aa). The interval 1112 to 1250 is oligomerization; that stretch reads SASWLKKFND…SPGTGKSLAT (139 aa). The RNA-binding stretch occupies residues 1133 to 1137; that stretch reads SSKIS. Residues 1216–1374 form the SF3 helicase domain; that stretch reads EKRMNNYMQF…YKTDLGRLDA (159 aa). 1240–1247 contributes to the ATP binding site; sequence GSPGTGKS. Zn(2+) contacts are provided by Cys-1381, Cys-1392, and Cys-1397. The C4-type; degenerate zinc-finger motif lies at 1381-1397; that stretch reads CTENNTANFKRCSPLVC. An RNA-binding region spans residues 1424–1431; that stretch reads EYNNRSAI. The tract at residues 1435–1440 is oligomerization; that stretch reads IEALFQ. An intramembrane segment occupies 1504-1519; that stretch reads SIATVVAVVSLVYVIY. The Cytoplasmic segment spans residues 1520–2193; the sequence is KLFAGFQGAY…NLRRNWLELF (674 aa). Tyr-1529 carries the O-(5'-phospho-RNA)-tyrosine modification. Positions 1549–1727 constitute a Peptidase C3 domain; it reads GPSLDFALSL…FCAGLKRGYF (179 aa). Active-site for protease 3C activity residues include His-1588, Glu-1619, and Cys-1695. In terms of domain architecture, RdRp catalytic spans 1958 to 2074; that stretch reads GSLFAFDYSG…SYPFPIDCSE (117 aa). 2 residues coordinate Mg(2+): Asp-1964 and Asp-2060.

It belongs to the picornaviruses polyprotein family. As to quaternary structure, interacts with capsid protein VP1 and capsid protein VP3 to form heterotrimeric protomers. In terms of assembly, interacts with capsid protein VP0, and capsid protein VP3 to form heterotrimeric protomers. Five protomers subsequently associate to form pentamers which serve as building blocks for the capsid. Interacts with capsid protein VP2, capsid protein VP3 and capsid protein VP4 following cleavage of capsid protein VP0. Interacts with capsid protein VP1 and capsid protein VP3 in the mature capsid. As to quaternary structure, interacts with capsid protein VP0 and capsid protein VP1 to form heterotrimeric protomers. Five protomers subsequently associate to form pentamers which serve as building blocks for the capsid. Interacts with capsid protein VP4 in the mature capsid. Interacts with protein 2C; this interaction may be important for virion morphogenesis. In terms of assembly, interacts with capsid protein VP1 and capsid protein VP3. Homodimer. As to quaternary structure, homohexamer; forms a hexameric ring structure with 6-fold symmetry characteristic of AAA+ ATPases. Interacts (via N-terminus) with host RTN3 (via reticulon domain); this interaction is important for viral replication. Interacts with capsid protein VP3; this interaction may be important for virion morphogenesis. In terms of assembly, interacts with protein 3CD. Homodimer. Interacts with host GBF1. Interacts (via GOLD domain) with host ACBD3 (via GOLD domain); this interaction allows the formation of a viral protein 3A/ACBD3 heterotetramer with a 2:2 stoichiometry, which will stimulate the recruitment of host PI4KB in order to synthesize PI4P at the viral RNA replication sites. As to quaternary structure, interacts with RNA-directed RNA polymerase. In terms of assembly, interacts with host IFIH1/MDA5; this interaction inhibits host IFIH1. Protein 3CD: Interacts with protein 3AB and with RNA-directed RNA polymerase. As to quaternary structure, interacts with Viral protein genome-linked and with protein 3CD. Mg(2+) is required as a cofactor. Post-translationally, specific enzymatic cleavages in vivo by the viral proteases yield processing intermediates and the mature proteins. Myristoylation is required for the formation of pentamers during virus assembly. Further assembly of 12 pentamers and a molecule of genomic RNA generates the provirion. In terms of processing, during virion maturation, immature virions are rendered infectious following cleavage of VP0 into VP4 and VP2. This maturation seems to be an autocatalytic event triggered by the presence of RNA in the capsid and it is followed by a conformational change infectious virion. Post-translationally, myristoylation is required during RNA encapsidation and formation of the mature virus particle. VPg is uridylylated by the polymerase into VPg-pUpU. This acts as a nucleotide-peptide primer for the genomic RNA replication.

It is found in the virion. It localises to the host cytoplasm. Its subcellular location is the host cytoplasmic vesicle membrane. The protein resides in the host nucleus. It carries out the reaction a ribonucleoside 5'-triphosphate + H2O = a ribonucleoside 5'-diphosphate + phosphate + H(+). The catalysed reaction is Selective cleavage of Tyr-|-Gly bond in the picornavirus polyprotein.. The enzyme catalyses RNA(n) + a ribonucleoside 5'-triphosphate = RNA(n+1) + diphosphate. It catalyses the reaction Selective cleavage of Gln-|-Gly bond in the poliovirus polyprotein. In other picornavirus reactions Glu may be substituted for Gln, and Ser or Thr for Gly.. Replication or transcription is subject to high level of random mutations by the nucleotide analog ribavirin. Its function is as follows. Forms an icosahedral capsid of pseudo T=3 symmetry with capsid proteins VP2 and VP3. The capsid is 300 Angstroms in diameter, composed of 60 copies of each capsid protein and enclosing the viral positive strand RNA genome. Capsid protein VP1 mainly forms the vertices of the capsid. Capsid protein VP1 interacts with host cell receptor to provide virion attachment to target host cells. This attachment induces virion internalization. After binding to its receptor, the capsid undergoes conformational changes. Capsid protein VP1 N-terminus (that contains an amphipathic alpha-helix) and capsid protein VP4 are externalized. Together, they shape a pore in the host membrane through which viral genome is translocated to host cell cytoplasm. Forms an icosahedral capsid of pseudo T=3 symmetry with capsid proteins VP2 and VP3. The capsid is 300 Angstroms in diameter, composed of 60 copies of each capsid protein and enclosing the viral positive strand RNA genome. Functionally, lies on the inner surface of the capsid shell. After binding to the host receptor, the capsid undergoes conformational changes. Capsid protein VP4 is released, Capsid protein VP1 N-terminus is externalized, and together, they shape a pore in the host membrane through which the viral genome is translocated into the host cell cytoplasm. In terms of biological role, component of immature procapsids, which is cleaved into capsid proteins VP4 and VP2 after maturation. Allows the capsid to remain inactive before the maturation step. Its function is as follows. Cysteine protease that cleaves viral polyprotein and specific host proteins. It is responsible for the autocatalytic cleavage between the P1 and P2 regions, which is the first cleavage occurring in the polyprotein. Also cleaves the host translation initiation factor EIF4G1, in order to shut down the capped cellular mRNA translation. Inhibits the host nucleus-cytoplasm protein and RNA trafficking by cleaving host members of the nuclear pores. Counteracts stress granule formation probably by antagonizing its assembly or promoting its dissassembly. Cleaves and inhibits host IFIH1/MDA5, thereby inhibiting the type-I IFN production and the establishment of the antiviral state. Cleaves and inhibits host MAVS, thereby inhibiting the type-I IFN production and the establishment of the antiviral state. Plays an essential role in the virus replication cycle by acting as a viroporin. Creates a pore in the host endoplasmic reticulum and as a consequence releases Ca2+ in the cytoplasm of infected cell. In turn, high levels of cytoplasmic calcium may trigger membrane trafficking and transport of viral ER-associated proteins to viroplasms, sites of viral genome replication. Functionally, induces and associates with structural rearrangements of intracellular membranes. Displays RNA-binding, nucleotide binding and NTPase activities. May play a role in virion morphogenesis and viral RNA encapsidation by interacting with the capsid protein VP3. In terms of biological role, localizes the viral replication complex to the surface of membranous vesicles. Together with protein 3CD binds the Cis-Active RNA Element (CRE) which is involved in RNA synthesis initiation. Acts as a cofactor to stimulate the activity of 3D polymerase, maybe through a nucleid acid chaperone activity. Its function is as follows. Localizes the viral replication complex to the surface of membranous vesicles. It inhibits host cell endoplasmic reticulum-to-Golgi apparatus transport and causes the disassembly of the Golgi complex, possibly through GBF1 interaction. This would result in depletion of MHC, trail receptors and IFN receptors at the host cell surface. Plays an essential role in viral RNA replication by recruiting ACBD3 and PI4KB at the viral replication sites, thereby allowing the formation of the rearranged membranous structures where viral replication takes place. Acts as a primer for viral RNA replication and remains covalently bound to viral genomic RNA. VPg is uridylylated prior to priming replication into VPg-pUpU. The oriI viral genomic sequence may act as a template for this. The VPg-pUpU is then used as primer on the genomic RNA poly(A) by the RNA-dependent RNA polymerase to replicate the viral genome. During genome replication, the VPg-RNA linkage is removed by the host TDP2, thereby accelerating replication. During the late stage of the replication cycle, host TDP2 is excluded from sites of viral RNA synthesis and encapsidation, allowing for the generation of progeny virions. Functionally, involved in the viral replication complex and viral polypeptide maturation. It exhibits protease activity with a specificity and catalytic efficiency that is different from protease 3C. Protein 3CD lacks polymerase activity. Protein 3CD binds to the 5'UTR of the viral genome. In terms of biological role, major viral protease that mediates proteolytic processing of the polyprotein. Cleaves host EIF5B, contributing to host translation shutoff. Also cleaves host PABPC1, contributing to host translation shutoff. Binds and inhibits host IFIH1/MDA5, thereby inhibiting the type-I IFN production and the establishment of the antiviral state. Cleaves host MAP3K7/TAK1, resulting in inhibition of TRAF6-triggered NF-kappa-B induction. Cleaves host NLRP1, triggers host N-glycine-mediated degradation of the autoinhibitory NLRP1 N-terminal fragment. Its function is as follows. Replicates the viral genomic RNA on the surface of intracellular membranes. May form linear arrays of subunits that propagate along a strong head-to-tail interaction called interface-I. Covalently attaches UMP to a tyrosine of VPg, which is used to prime RNA synthesis. The positive stranded RNA genome is first replicated at virus induced membranous vesicles, creating a dsRNA genomic replication form. This dsRNA is then used as template to synthesize positive stranded RNA genomes. ss(+)RNA genomes are either translated, replicated or encapsidated. In Homo sapiens (Human), this protein is Genome polyprotein.